Reading from the N-terminus, the 325-residue chain is Proto-oncogene Mas (325 aa).

At 1-36 (MDGSNVTSFVVEEPTNISTGRNASVGNAHRQIPIVH) the chain is on the extracellular side. Residues Asn-5, Asn-16, and Asn-22 are each glycosylated (N-linked (GlcNAc...) asparagine). The chain crosses the membrane as a helical span at residues 37–61 (WVIMSISPVGFVENGILLWFLCFRM). Over 62 to 65 (RRNP) the chain is Cytoplasmic. A helical membrane pass occupies residues 66-86 (FTVYITHLSIADISLLFCIFI). At 87–104 (LSIDYALDYELSSGHYYT) the chain is on the extracellular side. The helical transmembrane segment at 105–128 (IVTLSVTFLFGYNTGLYLLTAISV) threads the bilayer. Residues 129–149 (ERCLSVLYPIWYRCHRPKYQS) lie on the Cytoplasmic side of the membrane. A helical membrane pass occupies residues 150–172 (ALVCALLWALSCLVTTMEYVMCI). The Extracellular segment spans residues 173–185 (DREEESHSRNDCR). Residues 186 to 206 (AVIIFIAILSFLVFTPLMLVS) form a helical membrane-spanning segment. At 207–224 (STILVVKIRKNTWASHSS) the chain is on the cytoplasmic side. The chain crosses the membrane as a helical span at residues 225–245 (KLYIVIMVTIIIFLIFAMPMR). The Extracellular portion of the chain corresponds to 246–263 (LLYLLYYEYWSTFGNLHH). Residues 264-284 (ISLLFSTINSSANPFIYFFVG) form a helical membrane-spanning segment. Residues 285 to 325 (SSKKKRFKESLKVVLTRAFKDEMQPRRQKDNCNTVTVETVV) are Cytoplasmic-facing.

The protein belongs to the G-protein coupled receptor 1 family. Interacts with AGTR1. Interacts with FLNA (via filamin repeat 21); increases PKA-mediated phosphorylation of FLNA.

Its subcellular location is the cell membrane. Its function is as follows. Receptor for angiotensin 1-7. Acts specifically as a functional antagonist of AGTR1 (angiotensin-2 type 1 receptor), although it up-regulates AGTR1 receptor levels. Positive regulation of AGTR1 levels occurs through activation of the G-proteins GNA11 and GNAQ, and stimulation of the protein kinase C signaling cascade. The antagonist effect on AGTR1 function is probably due to AGTR1 being physically altered by MAS1. This chain is Proto-oncogene Mas (MAS1), found in Homo sapiens (Human).